A 236-amino-acid polypeptide reads, in one-letter code: Alpha-tubulin N-acetyltransferase (236 aa).

Positions 21–201 (ASVPDGVSRW…NKFVVFHGFF (181 aa)) constitute an N-acetyltransferase domain. Residues 134–147 (FYVD…GYGK) and 171–180 (SDKLLGFMKK) contribute to the acetyl-CoA site. A disordered region spans residues 217–236 (SPTGAAAAATGTKAKNEMPG). Low complexity predominate over residues 219–229 (TGAAAAATGTK).

It belongs to the acetyltransferase ATAT1 family.

The enzyme catalyses L-lysyl-[alpha-tubulin] + acetyl-CoA = N(6)-acetyl-L-lysyl-[alpha-tubulin] + CoA + H(+). Specifically acetylates 'Lys-40' in alpha-tubulin on the lumenal side of microtubules. Promotes microtubule destabilization and accelerates microtubule dynamics; this activity may be independent of acetylation activity. Acetylates alpha-tubulin with a slow enzymatic rate, due to a catalytic site that is not optimized for acetyl transfer. Enters the microtubule through each end and diffuses quickly throughout the lumen of microtubules. Acetylates only long/old microtubules because of its slow acetylation rate since it does not have time to act on dynamically unstable microtubules before the enzyme is released. This is Alpha-tubulin N-acetyltransferase from Leishmania braziliensis.